The sequence spans 172 residues: 3-hydroxydecanoyl-[acyl-carrier-protein] dehydratase (172 aa).

His70 is an active-site residue.

It belongs to the thioester dehydratase family. FabA subfamily. As to quaternary structure, homodimer.

It localises to the cytoplasm. It carries out the reaction a (3R)-hydroxyacyl-[ACP] = a (2E)-enoyl-[ACP] + H2O. The catalysed reaction is (3R)-hydroxydecanoyl-[ACP] = (2E)-decenoyl-[ACP] + H2O. It catalyses the reaction (2E)-decenoyl-[ACP] = (3Z)-decenoyl-[ACP]. It participates in lipid metabolism; fatty acid biosynthesis. In terms of biological role, necessary for the introduction of cis unsaturation into fatty acids. Catalyzes the dehydration of (3R)-3-hydroxydecanoyl-ACP to E-(2)-decenoyl-ACP and then its isomerization to Z-(3)-decenoyl-ACP. Can catalyze the dehydratase reaction for beta-hydroxyacyl-ACPs with saturated chain lengths up to 16:0, being most active on intermediate chain length. This chain is 3-hydroxydecanoyl-[acyl-carrier-protein] dehydratase, found in Xylella fastidiosa (strain M12).